The primary structure comprises 313 residues: Methionyl-tRNA formyltransferase (313 aa).

Residue 109–112 (SLLP) participates in (6S)-5,6,7,8-tetrahydrofolate binding.

Belongs to the Fmt family.

The catalysed reaction is L-methionyl-tRNA(fMet) + (6R)-10-formyltetrahydrofolate = N-formyl-L-methionyl-tRNA(fMet) + (6S)-5,6,7,8-tetrahydrofolate + H(+). Functionally, attaches a formyl group to the free amino group of methionyl-tRNA(fMet). The formyl group appears to play a dual role in the initiator identity of N-formylmethionyl-tRNA by promoting its recognition by IF2 and preventing the misappropriation of this tRNA by the elongation apparatus. The protein is Methionyl-tRNA formyltransferase of Thermotoga sp. (strain RQ2).